A 486-amino-acid chain; its full sequence is Probable glycine dehydrogenase (decarboxylating) subunit 2 (486 aa).

A disordered region spans residues 1–26; sequence MLIFESSRPGRQARAQAPKPTAATND. Lysine 264 is subject to N6-(pyridoxal phosphate)lysine.

Belongs to the GcvP family. C-terminal subunit subfamily. As to quaternary structure, the glycine cleavage system is composed of four proteins: P, T, L and H. In this organism, the P 'protein' is a heterodimer of two subunits. Pyridoxal 5'-phosphate serves as cofactor.

It catalyses the reaction N(6)-[(R)-lipoyl]-L-lysyl-[glycine-cleavage complex H protein] + glycine + H(+) = N(6)-[(R)-S(8)-aminomethyldihydrolipoyl]-L-lysyl-[glycine-cleavage complex H protein] + CO2. Its function is as follows. The glycine cleavage system catalyzes the degradation of glycine. The P protein binds the alpha-amino group of glycine through its pyridoxal phosphate cofactor; CO(2) is released and the remaining methylamine moiety is then transferred to the lipoamide cofactor of the H protein. The chain is Probable glycine dehydrogenase (decarboxylating) subunit 2 from Nitrosococcus oceani (strain ATCC 19707 / BCRC 17464 / JCM 30415 / NCIMB 11848 / C-107).